Here is a 362-residue protein sequence, read N- to C-terminus: E3 ubiquitin-protein ligase TM129 (362 aa).

Residues 1-6 (MESPAV) lie on the Lumenal side of the membrane. The helical transmembrane segment at 7 to 27 (TFTLAYVVFSVCFVFTPNEFH) threads the bilayer. Residues 28–56 (SAGITVQNLLSGWLGSEDVAFVHYHIRRS) lie on the Cytoplasmic side of the membrane. Residues 57 to 77 (SATLLAHSLLPMGYFIGMCFA) traverse the membrane as a helical segment. The Lumenal portion of the chain corresponds to 78–94 (APEKELYNVHKAADGWK). A helical membrane pass occupies residues 95-115 (VFVLMAVLLPIATSILAFYWS). The Cytoplasmic portion of the chain corresponds to 116–362 (QKRWSNHPLA…FCIVDVCIVR (247 aa)). The RING-type; degenerate zinc-finger motif lies at 285–350 (CIGCMQTNAN…SSQVPCPTCR (66 aa)).

It belongs to the TMEM129 family. Integral component of ER-resident dislocation complexes.

The protein localises to the endoplasmic reticulum membrane. It carries out the reaction S-ubiquitinyl-[E2 ubiquitin-conjugating enzyme]-L-cysteine + [acceptor protein]-L-lysine = [E2 ubiquitin-conjugating enzyme]-L-cysteine + N(6)-ubiquitinyl-[acceptor protein]-L-lysine.. It participates in protein modification; protein ubiquitination. Its function is as follows. E3 ubiquitin-protein ligase involved in ER-associated protein degradation, preferentially associates with the E2 enzyme UBE2J2. In Xenopus laevis (African clawed frog), this protein is E3 ubiquitin-protein ligase TM129 (tmem129).